Consider the following 345-residue polypeptide: Dense granule protein 4 (345 aa).

Positions 1 to 20 (MQGTWFSLFVVVMVSHLACG) are cleaved as a signal peptide. Residues 227–251 (SVSVSTEDSGLTGVKDSSSSESTVT) are compositionally biased toward polar residues. A disordered region spans residues 227 to 271 (SVSVSTEDSGLTGVKDSSSSESTVTPADEAASESEEGDKTSRKSK). A helical membrane pass occupies residues 276 to 296 (ILTGLGVAATLAAAAAAAKAV). The segment at 298–345 (GFGGTRTSTAPAEAGKTELDDGYRPPPFNPRPSPYAELLKDLERMRKE) is disordered. Positions 321–330 (RPPPFNPRPS) are enriched in pro residues. The segment covering 335 to 345 (LLKDLERMRKE) has biased composition (basic and acidic residues).

O-glycosylated.

The protein localises to the secreted. It is found in the parasitophorous vacuole lumen. Its subcellular location is the parasitophorous vacuole membrane. The protein resides in the cytoplasmic vesicle. It localises to the secretory vesicle. Functionally, major granular component involved in excreted-secreted antigen (ESA) immunity. This chain is Dense granule protein 4 (GRA4), found in Toxoplasma gondii.